Consider the following 172-residue polypeptide: Adenine phosphoribosyltransferase (172 aa).

The protein belongs to the purine/pyrimidine phosphoribosyltransferase family. As to quaternary structure, homodimer.

The protein localises to the cytoplasm. The enzyme catalyses AMP + diphosphate = 5-phospho-alpha-D-ribose 1-diphosphate + adenine. It functions in the pathway purine metabolism; AMP biosynthesis via salvage pathway; AMP from adenine: step 1/1. In terms of biological role, catalyzes a salvage reaction resulting in the formation of AMP, that is energically less costly than de novo synthesis. This chain is Adenine phosphoribosyltransferase, found in Clostridium botulinum (strain ATCC 19397 / Type A).